We begin with the raw amino-acid sequence, 106 residues long: ATP synthase-coupling factor 6, mitochondrial (106 aa).

The protein belongs to the eukaryotic ATPase subunit F6 family. In terms of assembly, F-type ATPases have 2 components, CF(1) - the catalytic core - and CF(0) - the membrane proton channel. CF(0) seems to have nine subunits: a, b, c, d, e, f, g, F6 and 8 (or A6L).

The protein localises to the mitochondrion. It is found in the mitochondrion inner membrane. In terms of biological role, mitochondrial membrane ATP synthase (F(1)F(0) ATP synthase or Complex V) produces ATP from ADP in the presence of a proton gradient across the membrane which is generated by electron transport complexes of the respiratory chain. F-type ATPases consist of two structural domains, F(1) - containing the extramembraneous catalytic core and F(0) - containing the membrane proton channel, linked together by a central stalk and a peripheral stalk. During catalysis, ATP synthesis in the catalytic domain of F(1) is coupled via a rotary mechanism of the central stalk subunits to proton translocation. Part of the complex F(0) domain and the peripheric stalk, which acts as a stator to hold the catalytic alpha(3)beta(3) subcomplex and subunit a/ATP6 static relative to the rotary elements. In Drosophila melanogaster (Fruit fly), this protein is ATP synthase-coupling factor 6, mitochondrial.